The chain runs to 96 residues: UPF0358 protein Aflv_1873 (96 aa).

It belongs to the UPF0358 family.

The polypeptide is UPF0358 protein Aflv_1873 (Anoxybacillus flavithermus (strain DSM 21510 / WK1)).